Reading from the N-terminus, the 322-residue chain is N-acetyl-gamma-glutamyl-phosphate reductase (322 aa).

C132 is an active-site residue.

It belongs to the NAGSA dehydrogenase family. Type 1 subfamily.

The protein resides in the cytoplasm. The enzyme catalyses N-acetyl-L-glutamate 5-semialdehyde + phosphate + NADP(+) = N-acetyl-L-glutamyl 5-phosphate + NADPH + H(+). Its pathway is amino-acid biosynthesis; L-arginine biosynthesis; N(2)-acetyl-L-ornithine from L-glutamate: step 3/4. In terms of biological role, catalyzes the NADPH-dependent reduction of N-acetyl-5-glutamyl phosphate to yield N-acetyl-L-glutamate 5-semialdehyde. In Bacteroides fragilis (strain ATCC 25285 / DSM 2151 / CCUG 4856 / JCM 11019 / LMG 10263 / NCTC 9343 / Onslow / VPI 2553 / EN-2), this protein is N-acetyl-gamma-glutamyl-phosphate reductase.